The sequence spans 285 residues: 3-methyl-2-oxobutanoate hydroxymethyltransferase (285 aa).

The tract at residues 1 to 23 is disordered; it reads MSEHNVYGAAQPAQPAQPAQPRT. Residues 9-21 are compositionally biased toward low complexity; sequence AAQPAQPAQPAQP. Mg(2+) contacts are provided by D66 and D105. Residues 66-67, D105, and K135 contribute to the 3-methyl-2-oxobutanoate site; that span reads DS. E137 contributes to the Mg(2+) binding site. E203 serves as the catalytic Proton acceptor.

Belongs to the PanB family. In terms of assembly, homodecamer; pentamer of dimers. Requires Mg(2+) as cofactor.

The protein localises to the cytoplasm. The enzyme catalyses 3-methyl-2-oxobutanoate + (6R)-5,10-methylene-5,6,7,8-tetrahydrofolate + H2O = 2-dehydropantoate + (6S)-5,6,7,8-tetrahydrofolate. It functions in the pathway cofactor biosynthesis; (R)-pantothenate biosynthesis; (R)-pantoate from 3-methyl-2-oxobutanoate: step 1/2. Catalyzes the reversible reaction in which hydroxymethyl group from 5,10-methylenetetrahydrofolate is transferred onto alpha-ketoisovalerate to form ketopantoate. In Mycobacterium avium (strain 104), this protein is 3-methyl-2-oxobutanoate hydroxymethyltransferase.